Here is a 178-residue protein sequence, read N- to C-terminus: Female-specific protein transformer (178 aa).

2 stretches are compositionally biased toward basic and acidic residues: residues 1 to 18 (MKMD…DSHG) and 25 to 40 (RERE…DSKK). Residues 1 to 117 (MKMDADSSCG…RRYNPPPKII (117 aa)) form a disordered region. Basic residues-rich tracts occupy residues 59 to 73 (RRLR…RRSA) and 81 to 108 (RRHR…RSPR).

It localises to the nucleus speckle. Its function is as follows. Member of the regulatory pathway controlling female somatic sexual differentiation, regulated by Sxl. Activates dsx female-specific splicing by promoting the formation of a splicing enhancer complex which consists of tra, tra2 and sr proteins. The chain is Female-specific protein transformer (tra) from Drosophila erecta (Fruit fly).